The primary structure comprises 202 residues: Putative chromophore lyase CpcV (202 aa).

It belongs to the CpcS/CpeS biliprotein lyase family.

Its function is as follows. Covalently attaches a chromophore to Cys residue(s) of phycobiliproteins. In Picosynechococcus sp. (strain ATCC 27264 / PCC 7002 / PR-6) (Agmenellum quadruplicatum), this protein is Putative chromophore lyase CpcV (cpcV).